A 281-amino-acid chain; its full sequence is Eukaryotic translation initiation factor 3 subunit G (281 aa).

The segment at 1–32 is disordered; the sequence is MSRPAGRTDWAEEDDETELALPSQTVVKNKDG. Residues 202 to 280 enclose the RRM domain; it reads ATLRVTNVSE…LILRVEFAKK (79 aa).

It belongs to the eIF-3 subunit G family. In terms of assembly, component of the eukaryotic translation initiation factor 3 (eIF-3) complex.

The protein localises to the cytoplasm. Functionally, RNA-binding component of the eukaryotic translation initiation factor 3 (eIF-3) complex, which is involved in protein synthesis of a specialized repertoire of mRNAs and, together with other initiation factors, stimulates binding of mRNA and methionyl-tRNAi to the 40S ribosome. The eIF-3 complex specifically targets and initiates translation of a subset of mRNAs involved in cell proliferation. This subunit can bind 18S rRNA. The protein is Eukaryotic translation initiation factor 3 subunit G of Phaeosphaeria nodorum (strain SN15 / ATCC MYA-4574 / FGSC 10173) (Glume blotch fungus).